The primary structure comprises 196 residues: Glycerol-3-phosphate acyltransferase (196 aa).

4 consecutive transmembrane segments (helical) span residues 3-23 (NAVFVIAAYLLGSISFGILVS), 78-98 (VGVVCWVAVAVFLGHLYPVFY), 112-132 (VLLAFSPLLAGLALLSWIVVF), and 154-174 (WLLLPQIGYIIVVFVLSLLLI).

This sequence belongs to the PlsY family. As to quaternary structure, probably interacts with PlsX.

The protein localises to the cell inner membrane. The catalysed reaction is an acyl phosphate + sn-glycerol 3-phosphate = a 1-acyl-sn-glycero-3-phosphate + phosphate. It participates in lipid metabolism; phospholipid metabolism. In terms of biological role, catalyzes the transfer of an acyl group from acyl-phosphate (acyl-PO(4)) to glycerol-3-phosphate (G3P) to form lysophosphatidic acid (LPA). This enzyme utilizes acyl-phosphate as fatty acyl donor, but not acyl-CoA or acyl-ACP. The polypeptide is Glycerol-3-phosphate acyltransferase (Methylobacillus flagellatus (strain ATCC 51484 / DSM 6875 / VKM B-1610 / KT)).